Reading from the N-terminus, the 564-residue chain is O-fucosyltransferase 6 (564 aa).

A helical; Signal-anchor for type II membrane protein transmembrane segment spans residues 17–37 (LLPFICAVSGALLILFALLSI). N-linked (GlcNAc...) asparagine glycans are attached at residues asparagine 95 and asparagine 139. 277 to 279 (HLR) provides a ligand contact to substrate. N-linked (GlcNAc...) asparagine glycosylation is present at asparagine 449. The span at 501–512 (MDSRKFGKKEQK) shows a compositional bias: basic and acidic residues. The tract at residues 501 to 542 (MDSRKFGKKEQKEDEDAELSSSETDYEEDQTDLQDRGLYNGT) is disordered. The span at 513 to 532 (EDEDAELSSSETDYEEDQTD) shows a compositional bias: acidic residues. Asparagine 540 is a glycosylation site (N-linked (GlcNAc...) asparagine).

This sequence belongs to the glycosyltransferase GT106 family.

It localises to the membrane. The protein operates within glycan metabolism. In Arabidopsis thaliana (Mouse-ear cress), this protein is O-fucosyltransferase 6.